A 250-amino-acid chain; its full sequence is Indole-3-glycerol phosphate synthase (250 aa).

This sequence belongs to the TrpC family.

It catalyses the reaction 1-(2-carboxyphenylamino)-1-deoxy-D-ribulose 5-phosphate + H(+) = (1S,2R)-1-C-(indol-3-yl)glycerol 3-phosphate + CO2 + H2O. The protein operates within amino-acid biosynthesis; L-tryptophan biosynthesis; L-tryptophan from chorismate: step 4/5. This chain is Indole-3-glycerol phosphate synthase, found in Bacillus velezensis (strain DSM 23117 / BGSC 10A6 / LMG 26770 / FZB42) (Bacillus amyloliquefaciens subsp. plantarum).